Here is a 195-residue protein sequence, read N- to C-terminus: Flavin prenyltransferase UbiX (195 aa).

FMN-binding positions include 17 to 19, Ser43, 94 to 97, and Arg129; these read GGS and SAGT. Positions 159 and 175 each coordinate dimethylallyl phosphate.

Belongs to the UbiX/PAD1 family.

It catalyses the reaction dimethylallyl phosphate + FMNH2 = prenylated FMNH2 + phosphate. Functionally, flavin prenyltransferase that catalyzes the synthesis of the prenylated FMN cofactor (prenyl-FMN) for 4-hydroxy-3-polyprenylbenzoic acid decarboxylase UbiD. The prenyltransferase is metal-independent and links a dimethylallyl moiety from dimethylallyl monophosphate (DMAP) to the flavin N5 and C6 atoms of FMN. This is Flavin prenyltransferase UbiX from Deinococcus radiodurans (strain ATCC 13939 / DSM 20539 / JCM 16871 / CCUG 27074 / LMG 4051 / NBRC 15346 / NCIMB 9279 / VKM B-1422 / R1).